The primary structure comprises 122 residues: Large ribosomal subunit protein uL14 (122 aa).

Belongs to the universal ribosomal protein uL14 family. As to quaternary structure, part of the 50S ribosomal subunit. Forms a cluster with proteins L3 and L19. In the 70S ribosome, L14 and L19 interact and together make contacts with the 16S rRNA in bridges B5 and B8.

Binds to 23S rRNA. Forms part of two intersubunit bridges in the 70S ribosome. The protein is Large ribosomal subunit protein uL14 of Halalkalibacterium halodurans (strain ATCC BAA-125 / DSM 18197 / FERM 7344 / JCM 9153 / C-125) (Bacillus halodurans).